Consider the following 201-residue polypeptide: LexA repressor (201 aa).

Residues 28 to 48 (LREIGGHLGINGTLGVMKHLD) constitute a DNA-binding region (H-T-H motif). Active-site for autocatalytic cleavage activity residues include serine 120 and lysine 157.

Belongs to the peptidase S24 family. Homodimer.

It catalyses the reaction Hydrolysis of Ala-|-Gly bond in repressor LexA.. Its function is as follows. Represses a number of genes involved in the response to DNA damage (SOS response), including recA and lexA. In the presence of single-stranded DNA, RecA interacts with LexA causing an autocatalytic cleavage which disrupts the DNA-binding part of LexA, leading to derepression of the SOS regulon and eventually DNA repair. This Geotalea uraniireducens (strain Rf4) (Geobacter uraniireducens) protein is LexA repressor.